The primary structure comprises 200 residues: GTP-binding protein ypt2 (200 aa).

Residue 16-23 (GDSGVGKS) participates in GTP binding. Positions 38–46 (FITTIGIDF) match the Effector region motif. GTP is bound by residues 64 to 68 (DTAGQ) and 122 to 125 (NKCD). S-geranylgeranyl cysteine attachment occurs at residues Cys199 and Cys200.

It belongs to the small GTPase superfamily. Rab family.

It localises to the cell membrane. Functionally, protein transport. Probably involved in vesicular traffic. This is GTP-binding protein ypt2 (ypt2) from Schizosaccharomyces pombe (strain 972 / ATCC 24843) (Fission yeast).